The following is a 164-amino-acid chain: Transcription elongation factor GreA (164 aa).

Positions 50-76 (YHAAREEQGQQEARIRQLQELLNNAKV) form a coiled coil.

Belongs to the GreA/GreB family.

In terms of biological role, necessary for efficient RNA polymerase transcription elongation past template-encoded arresting sites. The arresting sites in DNA have the property of trapping a certain fraction of elongating RNA polymerases that pass through, resulting in locked ternary complexes. Cleavage of the nascent transcript by cleavage factors such as GreA or GreB allows the resumption of elongation from the new 3'terminus. GreA releases sequences of 2 to 3 nucleotides. This chain is Transcription elongation factor GreA, found in Mycolicibacterium smegmatis (strain ATCC 700084 / mc(2)155) (Mycobacterium smegmatis).